The sequence spans 311 residues: MSTFSLKIIRIGITLLVVLLAVIAIFKVWAFYTESPWTRDAKFTADVVAIAPDVSGLITDVPVKDNQLVQKGQILFVIDQPRYQQALAEAEADVAYYQTLAAEKQRESGRRQRLGIQAMSQEEIDQSNNVLQTVRHQLAKAVAVRDLAKLDLERTTVRAPAEGWVTNLNVHAGEFINRGATAVALVKKDTFYILAYLEETKLEGVKPGHRAEITPLGSNRILHGTVDSISAGVTNSSSSADSKGLATIDNNLEWVRLAQRVPVKIRLDSEDQQHSYPAGTTATVVITGSTDRDPNQASPIVKLMHRLREFG.

A helical membrane pass occupies residues 11-31 (IGITLLVVLLAVIAIFKVWAF).

The protein belongs to the membrane fusion protein (MFP) (TC 8.A.1) family.

It is found in the cell inner membrane. Forms an efflux pump with AaeB. This is p-hydroxybenzoic acid efflux pump subunit AaeA from Yersinia enterocolitica serotype O:8 / biotype 1B (strain NCTC 13174 / 8081).